A 592-amino-acid polypeptide reads, in one-letter code: Tegument protein US23 (592 aa).

Positions 407–491 are disordered; the sequence is PRSLGDGEEE…NNVVPNVERR (85 aa). Over residues 460–481 the composition is skewed to acidic residues; the sequence is ADDEEQGEDDDDSGAEPMEPEE.

The protein belongs to the herpesviridae US22 family.

The protein localises to the virion tegument. The sequence is that of Tegument protein US23 (US23) from Homo sapiens (Human).